Reading from the N-terminus, the 548-residue chain is C2H2-type transcription factor MSN2 (548 aa).

C2H2-type zinc fingers lie at residues 420–448 and 449–471; these read FKCELCDRRFRRQEHLKRHYRSLHTQDKP and FECNECGKKFSRSDNLTQHARTH.

As to quaternary structure, interacts with HOG1/OSM1.

It localises to the nucleus. It is found in the cytoplasm. In terms of biological role, transcription factor that acts as a key downstream transcription factor in the HOG1-MAPK pathway. Regulates the expression of a series of downstream genes and controls vegetative growth, conidiogenesis, cell wall integrity, stress response, mitochondrial morphology, and pathogenicity. Binds to a putative promoter region 1500 bp upstream of the start codons of the target genes MGG_07019, POX1 and DCI1. Binds to the AGGGG and CCCCT motif of the COS1 promoter region. Involved in fatty acid beta-oxidation by directly regulating the expression of the dienoyl-CoA isomerase DCI1, thereby facilitating invasive hyphal growth during the early infection stage. Targets also the 3-methylglutaconyl-CoA hydratase-encoding gene (AUH1) to control mitochondrial morphology and mitophagy, which are critical for the infectious growth of the pathogen. This chain is C2H2-type transcription factor MSN2, found in Pyricularia oryzae (strain 70-15 / ATCC MYA-4617 / FGSC 8958) (Rice blast fungus).